Here is a 290-residue protein sequence, read N- to C-terminus: 33 kDa chaperonin (290 aa).

2 disulfides stabilise this stretch: Cys235-Cys237 and Cys268-Cys271.

This sequence belongs to the HSP33 family. Post-translationally, under oxidizing conditions two disulfide bonds are formed involving the reactive cysteines. Under reducing conditions zinc is bound to the reactive cysteines and the protein is inactive.

It is found in the cytoplasm. In terms of biological role, redox regulated molecular chaperone. Protects both thermally unfolding and oxidatively damaged proteins from irreversible aggregation. Plays an important role in the bacterial defense system toward oxidative stress. The chain is 33 kDa chaperonin from Streptococcus pyogenes serotype M18 (strain MGAS8232).